The following is a 146-amino-acid chain: Probable actin-related protein 2/3 complex subunit 5 (146 aa).

The protein belongs to the ARPC5 family. Component of the Arp2/3 complex composed of ARP2, ARP3, ARPC1B/p41-ARC, ARPC2/p34-ARC, ARPC3/p21-ARC, ARPC4/p20-ARC and ARPC5/p16-ARC.

The protein resides in the cytoplasm. It localises to the cytoskeleton. Functionally, functions as a component of the Arp2/3 complex which is involved in regulation of actin polymerization and together with an activating nucleation-promoting factor (NPF) mediates the formation of branched actin networks. In Caenorhabditis elegans, this protein is Probable actin-related protein 2/3 complex subunit 5.